Consider the following 592-residue polypeptide: Leucine-rich repeat and immunoglobulin-like domain-containing nogo receptor-interacting protein 3 (592 aa).

The N-terminal stretch at 1 to 24 is a signal peptide; sequence MTCWLCVLSLPLLLLPAAPPPAGG. Positions 25–54 constitute an LRRNT domain; it reads CPARCECTVQTRAVACTRRRLTAVPDGIPA. Residues 25–531 lie on the Extracellular side of the membrane; it reads CPARCECTVQ…LDLTTILVST (507 aa). 11 LRR repeats span residues 55-76, 79-100, 103-124, 127-148, 151-172, 175-196, 207-228, 247-268, 271-292, 295-316, and 319-340; these read ETRL…DLAA, ALEE…AFAN, RLRV…VFTR, NLTL…TFQD, SLRR…AFAG, ALEE…SLGH, HLAI…LHLE, NLTS…ALRH, HLTC…SFRD, RLRE…AFLG, and QIRL…TFHS. A glycan (N-linked (GlcNAc...) asparagine) is linked at asparagine 127. Asparagine 185 carries an N-linked (GlcNAc...) asparagine glycan. Residues asparagine 247, asparagine 257, and asparagine 276 are each glycosylated (N-linked (GlcNAc...) asparagine). Asparagine 324 carries N-linked (GlcNAc...) asparagine glycosylation. Residues 352-406 form the LRRCT domain; the sequence is NPLACDCRLLWIVQRRKTLNFDGRLPACATPAEVRGDALRNLPDSVLFEYFVCRK. An Ig-like C2-type domain is found at 407 to 496; the sequence is PKIRERRLQR…GNDTYFATLT (90 aa). Cysteine 429 and cysteine 480 are disulfide-bonded. 2 N-linked (GlcNAc...) asparagine glycosylation sites follow: asparagine 488 and asparagine 512. A helical membrane pass occupies residues 532 to 552; that stretch reads AMGCITFLGVVLFCFVLLFVW. Topologically, residues 553–592 are cytoplasmic; sequence SRGRGQHKNNFSVEYSFRKVDGPAAAAGQGGARKFNMKMI.

It localises to the membrane. This is Leucine-rich repeat and immunoglobulin-like domain-containing nogo receptor-interacting protein 3 (LINGO3) from Homo sapiens (Human).